The following is a 595-amino-acid chain: ATPase family AAA domain-containing protein 3 (595 aa).

The tract at residues 1–48 is disordered; sequence MSWLFGVQKNATPQIPDDFQAGAAPGGPQQPGQGQRQEGNSKMAYSFD. The Mitochondrial intermembrane segment spans residues 1 to 243; that stretch reads MSWLFGVQKN…LNQFLNDKTK (243 aa). Positions 20–35 are enriched in low complexity; sequence QAGAAPGGPQQPGQGQ. Coiled coils occupy residues 80–107 and 140–175; these read VTRQ…HIRV and EELA…EHEL. A helical transmembrane segment spans residues 244-260; sequence IAAAVGGLTALAVGWYT. Residues 261–595 lie on the Mitochondrial matrix side of the membrane; it reads AKRGTGVTAR…GTTLKRETAV (335 aa). 349 to 356 lines the ATP pocket; the sequence is GPPGTGKT. Positions 592–595 match the PDZ-binding motif; it reads ETAV.

Belongs to the AAA ATPase family.

Its subcellular location is the mitochondrion inner membrane. It is found in the mitochondrion matrix. The protein resides in the mitochondrion nucleoid. Functionally, essential for mitochondrial network organization, mitochondrial metabolism and cell growth at organism and cellular level. Important during development for the up-regulation of mitochondrial activity during the transition to higher larval stages. Regulates mitochondrial iron homeostasis. May play an important role in mitochondrial protein synthesis. May also participate in mitochondrial DNA replication. May bind to mitochondrial DNA D-loops and contribute to nucleoid stability. Plays a role in regulating the production of reactive oxygen species in response to heat stress. The sequence is that of ATPase family AAA domain-containing protein 3 from Caenorhabditis elegans.